Reading from the N-terminus, the 451-residue chain is MNVVLKQRIPLKIKRMGINGEGIGFYKKTLIFVPGALKGEEVFCQISSVRRNFAEAKLLKINKKSKNRVDPACSIYKECGGCQIMHLQYDKQLEFKTDVIRQALMKFKPEGYENYEIRKTIGMSEPEHYRAKLQFQVRSFGGNVRAGLYAQGTHRLIDIKDCLVQDSLTQEMINRVAELLGKYKLPIYNERKIAGVRTVMIRRAQASGEVQLIFITSKRLDFDDVVIELVREFPELKTVAVNINASKTSDIYGQITEVIWGQESINEEVLDYGFSLSPRAFYQLNPKQTQILYSEAVKALDVKEDDDLIDAYCGVGTIGLAFAGKVKSVRGMDIIPEAIQDAKENALHMGFTNTHYEAGKAEDVIPRWYSEGFRANALIVDPPRTGLDDKLLNTILKMPPEKMVYVSCNTSTLARDLVTLTKVYHVHYIQSVDMFPHTARTEAVVKLQRKE.

One can recognise a TRAM domain in the interval 2-60; it reads NVVLKQRIPLKIKRMGINGEGIGFYKKTLIFVPGALKGEEVFCQISSVRRNFAEAKLLK. 4 residues coordinate [4Fe-4S] cluster: Cys73, Cys79, Cys82, and Cys162. S-adenosyl-L-methionine-binding residues include Gln283, Tyr312, Asp333, and Asp381. The Nucleophile role is filled by Cys408.

This sequence belongs to the class I-like SAM-binding methyltransferase superfamily. RNA M5U methyltransferase family.

This is an uncharacterized protein from Streptococcus agalactiae serotype III (strain NEM316).